A 2375-amino-acid chain; its full sequence is Talin-2 (2375 aa).

In terms of domain architecture, FERM spans 88 to 406 (RPQKIRMLDG…GYIDIILKKK (319 aa)). The segment at 312–406 (GVSFFLVKEK…GYIDIILKKK (95 aa)) is interaction with PIP5K1C. A phosphoserine mark is found at S428, S450, S624, and S1024. The residue at position 1666 (Y1666) is a Phosphotyrosine. Residues 2205–2375 (TEWVDPEDPT…KRLQAAGNAV (171 aa)) form the I/LWEQ domain.

In terms of assembly, interacts directly with PIP5K1C.

The protein localises to the cytoplasm. Its subcellular location is the cell junction. It is found in the focal adhesion. It localises to the synapse. The protein resides in the cell membrane. The protein localises to the cytoskeleton. Its function is as follows. As a major component of focal adhesion plaques that links integrin to the actin cytoskeleton, may play an important role in cell adhesion. Recruits PIP5K1C to focal adhesion plaques and strongly activates its kinase activity. The protein is Talin-2 (Tln2) of Mus musculus (Mouse).